A 769-amino-acid chain; its full sequence is Serine protease HtrA-like (769 aa).

The span at 1–20 shows a compositional bias: basic residues; sequence MDIGKKHVIPKSQYRRKRRE. A disordered region spans residues 1-390; that stretch reads MDIGKKHVIP…ATSKLNKGRA (390 aa). 2 stretches are compositionally biased toward basic and acidic residues: residues 21–64 and 71–108; these read FFHN…ERFK and LEQRNRDVNENKAEESKSNQDSKSAYNRDHYLTDDVSK. The span at 126–137 shows a compositional bias: polar residues; it reads YEQNSEATLSTK. The span at 138–186 shows a compositional bias: basic and acidic residues; it reads STDKVESSDMRKLSPDKNKVGHEEQHVLSKPSEHDKETRIDFESSRTDS. Composition is skewed to polar residues over residues 202–221 and 247–262; these read GNESSNLKSEVISDKSNTVP and QQSQNEQTKTYTYGDS. The span at 264–295 shows a compositional bias: basic and acidic residues; the sequence is QNDKSNHENDLSHHTPSKSDDKDNVMREDHIV. Residues 298–308 are compositionally biased toward polar residues; the sequence is NPDNDINTPSL. Basic and acidic residues predominate over residues 310–330; it reads KIDDDRKLDEKIHVEDKHKQN. Residues 331-347 show a composition bias toward polar residues; that stretch reads ADSSETVGYQSQSSVSH. The span at 348-362 shows a compositional bias: basic and acidic residues; it reads RSTEKRNMAINDHHK. Positions 366–390 are enriched in polar residues; it reads QKLNTKTSANNNQKKATSKLNKGRA. A helical membrane pass occupies residues 410-430; sequence LVILMGIIILIVILNAIFNNV. Catalysis depends on charge relay system residues His504, Asp534, and Ser619. The PDZ domain maps to 680 to 733; that stretch reads IASLNSFERQAVKLPGKVKNGVVVDQVDNNGLADQSSLKKGDVITELDGKLLED.

It belongs to the peptidase S1C family.

It localises to the cell membrane. The polypeptide is Serine protease HtrA-like (Staphylococcus aureus (strain bovine RF122 / ET3-1)).